Reading from the N-terminus, the 333-residue chain is Probable ABC transporter permease protein y4mJ (333 aa).

10 consecutive transmembrane segments (helical) span residues leucine 30–alanine 50, alanine 62–isoleucine 82, leucine 84–glycine 104, alanine 110–valine 130, leucine 133–valine 153, isoleucine 175–phenylalanine 195, phenylalanine 228–isoleucine 248, serine 253–serine 273, leucine 274–isoleucine 294, and leucine 300–valine 320.

Belongs to the binding-protein-dependent transport system permease family. AraH/RbsC subfamily.

The protein localises to the cell inner membrane. In terms of biological role, probably part of the binding-protein-dependent transport system y4mIJK. This system probably transports a sugar. Probably responsible for the translocation of the substrate across the membrane. This Sinorhizobium fredii (strain NBRC 101917 / NGR234) protein is Probable ABC transporter permease protein y4mJ.